The following is a 224-amino-acid chain: DeSI-like protein At4g17486 (224 aa).

Residues 26–163 (TPVYLNVYDL…FCNCLLPESI (138 aa)) enclose the PPPDE domain. Catalysis depends on residues H51 and C125. The segment at 176 to 201 (EFSDEDESNSEASSVSDEEGSEQHLI) is disordered.

Belongs to the DeSI family.

The polypeptide is DeSI-like protein At4g17486 (Arabidopsis thaliana (Mouse-ear cress)).